A 361-amino-acid polypeptide reads, in one-letter code: tRNA-specific 2-thiouridylase MnmA (361 aa).

ATP-binding positions include 11 to 18 and methionine 37; that span reads GMSGGVDS. The interaction with target base in tRNA stretch occupies residues 97–99; that stretch reads NPD. Residue cysteine 102 is the Nucleophile of the active site. Residues cysteine 102 and cysteine 199 are joined by a disulfide bond. Position 126 (glycine 126) interacts with ATP. The segment at 149–151 is interaction with tRNA; the sequence is KDQ. Cysteine 199 functions as the Cysteine persulfide intermediate in the catalytic mechanism. An interaction with tRNA region spans residues 311–312; that stretch reads RY.

Belongs to the MnmA/TRMU family.

Its subcellular location is the cytoplasm. It catalyses the reaction S-sulfanyl-L-cysteinyl-[protein] + uridine(34) in tRNA + AH2 + ATP = 2-thiouridine(34) in tRNA + L-cysteinyl-[protein] + A + AMP + diphosphate + H(+). In terms of biological role, catalyzes the 2-thiolation of uridine at the wobble position (U34) of tRNA, leading to the formation of s(2)U34. The protein is tRNA-specific 2-thiouridylase MnmA of Cupriavidus necator (strain ATCC 17699 / DSM 428 / KCTC 22496 / NCIMB 10442 / H16 / Stanier 337) (Ralstonia eutropha).